A 219-amino-acid polypeptide reads, in one-letter code: 7-cyano-7-deazaguanine synthase (219 aa).

10-20 (FSGGQDSTTCL) serves as a coordination point for ATP. Residues cysteine 188, cysteine 197, cysteine 200, and cysteine 203 each contribute to the Zn(2+) site.

The protein belongs to the QueC family. As to quaternary structure, homodimer. Zn(2+) serves as cofactor.

It carries out the reaction 7-carboxy-7-deazaguanine + NH4(+) + ATP = 7-cyano-7-deazaguanine + ADP + phosphate + H2O + H(+). The protein operates within purine metabolism; 7-cyano-7-deazaguanine biosynthesis. Functionally, catalyzes the ATP-dependent conversion of 7-carboxy-7-deazaguanine (CDG) to 7-cyano-7-deazaguanine (preQ(0)). This Clostridium botulinum (strain Kyoto / Type A2) protein is 7-cyano-7-deazaguanine synthase.